A 93-amino-acid polypeptide reads, in one-letter code: Putative protein adenylyltransferase MJ0435 (93 aa).

The short motif at 26-40 (GSYARNEQKETSDID) is the GSX(10)DXD motif element. Residues Asp38, Asp40, and Asp70 each contribute to the Mg(2+) site.

It belongs to the MntA antitoxin family. In terms of assembly, probably forms a complex with cognate toxin MJ0434. The cofactor is Mg(2+).

It catalyses the reaction L-tyrosyl-[protein] + ATP = O-(5'-adenylyl)-L-tyrosyl-[protein] + diphosphate. The enzyme catalyses O-(5'-adenylyl)-L-tyrosyl-[protein] + ATP = O-[5'-(adenylyl-(5'-&gt;3')-adenylyl)]-L-tyrosyl-[protein] + diphosphate. Its function is as follows. Probable antitoxin component of a putative type VII toxin-antitoxin (TA) system. Neutralizes cognate toxic MJ0434 by di-AMPylation. The polypeptide is Putative protein adenylyltransferase MJ0435 (Methanocaldococcus jannaschii (strain ATCC 43067 / DSM 2661 / JAL-1 / JCM 10045 / NBRC 100440) (Methanococcus jannaschii)).